The following is a 135-amino-acid chain: Interleukin-4 (135 aa).

Residues 1-24 (MGLTYQLIPVLVCLLVCTSHFAHG) form the signal peptide. 3 disulfides stabilise this stretch: Cys27–Cys135, Cys48–Cys85, and Cys70–Cys105. N-linked (GlcNAc...) asparagine glycosylation is present at Asn62.

The protein belongs to the IL-4/IL-13 family.

The protein localises to the secreted. Participates in at least several B-cell activation processes as well as of other cell types. It is a costimulator of DNA-synthesis. It induces the expression of class II MHC molecules on resting B-cells. It enhances both secretion and cell surface expression of IgE and IgG1. It also regulates the expression of the low affinity Fc receptor for IgE (CD23) on both lymphocytes and monocytes. Positively regulates IL31RA expression in macrophages. Stimulates autophagy in dendritic cells by interfering with mTORC1 signaling and through the induction of RUFY4. The protein is Interleukin-4 (IL4) of Boselaphus tragocamelus (Nilgai).